We begin with the raw amino-acid sequence, 357 residues long: Alkanal monooxygenase alpha chain (357 aa).

It belongs to the bacterial luciferase oxidoreductase family. As to quaternary structure, heterodimer of an alpha and a beta chain.

The catalysed reaction is a long-chain fatty aldehyde + FMNH2 + O2 = a long-chain fatty acid + hnu + FMN + H2O + 2 H(+). Light-emitting reaction in luminous bacteria. The chain is Alkanal monooxygenase alpha chain (luxA) from Kryptophanaron alfredi symbiont.